Here is a 325-residue protein sequence, read N- to C-terminus: Glutarate 2-hydroxylase (325 aa).

Histidine 160, aspartate 162, and histidine 292 together coordinate Fe cation.

It belongs to the glutarate hydroxylase family. As to quaternary structure, homotetramer. The cofactor is Fe(2+).

It carries out the reaction glutarate + 2-oxoglutarate + O2 = (S)-2-hydroxyglutarate + succinate + CO2. It functions in the pathway amino-acid degradation. In terms of biological role, acts as an alpha-ketoglutarate-dependent dioxygenase catalyzing hydroxylation of glutarate (GA) to L-2-hydroxyglutarate (L2HG). Functions in a L-lysine degradation pathway that proceeds via cadaverine, glutarate and L-2-hydroxyglutarate. The chain is Glutarate 2-hydroxylase from Pseudomonas putida (strain ATCC 700007 / DSM 6899 / JCM 31910 / BCRC 17059 / LMG 24140 / F1).